The sequence spans 234 residues: uncharacterized protein (234 aa).

Residues 199 to 234 (DNQNEPLENYSDDNNFSNFDETEHVDDSEMNDDNFI) form a disordered region.

This is an uncharacterized protein from Buchnera aphidicola subsp. Schizaphis graminum (strain Sg).